Reading from the N-terminus, the 133-residue chain is uncharacterized protein (133 aa).

This is an uncharacterized protein from Human adenovirus B serotype 7 (HAdV-7).